Reading from the N-terminus, the 415-residue chain is Serine hydroxymethyltransferase 1 (415 aa).

Residues leucine 122 and 126 to 128 each bind (6S)-5,6,7,8-tetrahydrofolate; that span reads GHL. N6-(pyridoxal phosphate)lysine is present on lysine 230.

The protein belongs to the SHMT family. As to quaternary structure, homodimer. Pyridoxal 5'-phosphate is required as a cofactor.

The protein resides in the cytoplasm. It catalyses the reaction (6R)-5,10-methylene-5,6,7,8-tetrahydrofolate + glycine + H2O = (6S)-5,6,7,8-tetrahydrofolate + L-serine. Its pathway is one-carbon metabolism; tetrahydrofolate interconversion. It participates in amino-acid biosynthesis; glycine biosynthesis; glycine from L-serine: step 1/1. In terms of biological role, catalyzes the reversible interconversion of serine and glycine with tetrahydrofolate (THF) serving as the one-carbon carrier. This reaction serves as the major source of one-carbon groups required for the biosynthesis of purines, thymidylate, methionine, and other important biomolecules. Also exhibits THF-independent aldolase activity toward beta-hydroxyamino acids, producing glycine and aldehydes, via a retro-aldol mechanism. The chain is Serine hydroxymethyltransferase 1 from Burkholderia mallei (strain ATCC 23344).